We begin with the raw amino-acid sequence, 500 residues long: MNYFPWLTIIVVFPIFAGSLIFFLPHKGNRVIRWYTICICILELLLTTYAFCYHFQSDDPLIQLVEDYKWIDFFDFHWRLGIDGLSIGPILLTGFITTLATLAAWPVTRDSRLFHFLMLAMYSGQIGLFSSRDLLLFFIMWELELIPVYLLLAMWGGKKRLYSATKFILYTAGGSVFLLMGVLGVALYGSNEPTLNFETSVNQSYPVVLEIIFYIGFFIAFAVKSPIIPLHTWLPDTHGEAHYSTCMLLAGILLKMGAYGLIRINMELLPHAHSIFSPWLMIIGTIQIIYAASTSLGQRNLKKRIAYSSVSHMGFIIIGISSLTDTGLNGALLQIISHGFIGAALFFLAGTTYDRIRLVYLDEMGGIAIPMPKMFTMFSSFSMASLALPGMSGFVAELIVFFGIITGQKYLLMPKLLITFVMAIGIILTPIYSLSMPRQMFYGYKLFNAPKDSFFDSGPRELFLSISIFLPVIGIGIYPDFVLSLAVDKVEVILSNFFYR.

Transmembrane regions (helical) follow at residues 4 to 24 (FPWL…IFFL), 35 to 55 (YTIC…CYHF), 87 to 107 (IGPI…AWPV), 113 to 130 (LFHF…GLFS), 134 to 154 (LLLF…LLAM), 167 to 187 (FILY…GVAL), 208 to 228 (VLEI…SPII), 242 to 262 (HYST…YGLI), 272 to 292 (AHSI…IYAA), 305 to 325 (IAYS…SLTD), 330 to 350 (GALL…FLAG), 386 to 406 (LALP…GIIT), 416 to 436 (LLIT…SLSM), and 462 to 482 (LFLS…PDFV).

This sequence belongs to the complex I subunit 4 family.

The protein resides in the plastid. Its subcellular location is the chloroplast thylakoid membrane. It carries out the reaction a plastoquinone + NADH + (n+1) H(+)(in) = a plastoquinol + NAD(+) + n H(+)(out). The enzyme catalyses a plastoquinone + NADPH + (n+1) H(+)(in) = a plastoquinol + NADP(+) + n H(+)(out). This is NAD(P)H-quinone oxidoreductase chain 4, chloroplastic from Solanum lycopersicum (Tomato).